A 329-amino-acid polypeptide reads, in one-letter code: Delta(7)-sterol 5(6)-desaturase erg32 (329 aa).

The next 2 helical transmembrane spans lie at 67–87 and 149–169; these read LFLITWIMGTLSYFLSASFAY and FYLFFSIALFLLFSDFLIYWI. Residues 156 to 281 form the Fatty acid hydroxylase domain; sequence ALFLLFSDFL…FFTLFDRLCS (126 aa). The Histidine box-1 signature appears at 170-175; the sequence is HRALHH. Residues 183–187 carry the Histidine box-2 motif; that stretch reads HKLHH. Residues 210–230 form a helical membrane-spanning segment; the sequence is LPYHMFPFFFPLNKYVYLLLF. The Histidine box-3 signature appears at 257-262; that stretch reads HHAAHH.

The protein belongs to the sterol desaturase family. Requires Fe cation as cofactor.

It localises to the endoplasmic reticulum membrane. The protein resides in the golgi apparatus membrane. It catalyses the reaction episterol + 2 Fe(II)-[cytochrome b5] + O2 + 2 H(+) = 5-dehydroepisterol + 2 Fe(III)-[cytochrome b5] + 2 H2O. It participates in steroid metabolism; ergosterol biosynthesis. C-5 sterol desaturase; part of the third module of ergosterol biosynthesis pathway that includes by the late steps of the pathway. Erg31 and erg32 catalyze the introduction of a C-5 double bond in the B ring to produce 5-dehydroepisterol. The third module or late pathway involves the ergosterol synthesis itself through consecutive reactions that mainly occur in the endoplasmic reticulum (ER) membrane. Firstly, the squalene synthase erg9 catalyzes the condensation of 2 farnesyl pyrophosphate moieties to form squalene, which is the precursor of all steroids. Secondly, squalene is converted into lanosterol by the consecutive action of the squalene epoxidase erg1 and the lanosterol synthase erg7. The lanosterol 14-alpha-demethylase erg11/cyp1 catalyzes C14-demethylation of lanosterol to produce 4,4'-dimethyl cholesta-8,14,24-triene-3-beta-ol. In the next steps, a complex process involving various demethylation, reduction and desaturation reactions catalyzed by the C-14 reductase erg24 and the C-4 demethylation complex erg25-erg26-erg27 leads to the production of zymosterol. Erg28 likely functions in the C-4 demethylation complex reaction by tethering erg26 and Erg27 to the endoplasmic reticulum or to facilitate interaction between these proteins. Then, the sterol 24-C-methyltransferase erg6 catalyzes the methyl transfer from S-adenosyl-methionine to the C-24 of zymosterol to form fecosterol. The C-8 sterol isomerase erg2 catalyzes the reaction which results in unsaturation at C-7 in the B ring of sterols and thus converts fecosterol to episterol. The sterol-C5-desaturases erg31 and erg32 then catalyze the introduction of a C-5 double bond in the B ring to produce 5-dehydroepisterol. The C-22 sterol desaturase erg5 further converts 5-dehydroepisterol into ergosta-5,7,22,24(28)-tetraen-3beta-ol by forming the C-22(23) double bond in the sterol side chain. Finally, ergosta-5,7,22,24(28)-tetraen-3beta-ol is substrate of the C-24(28) sterol reductase erg4 to produce ergosterol. In the genus Schizosaccharomyces, a second route exists between lanosterol and fecosterol, via the methylation of lanosterol to eburicol by erg6, followed by C14-demethylation by erg11/cyp1 and C4-demethylation by the demethylation complex erg25-erg26-erg27. The chain is Delta(7)-sterol 5(6)-desaturase erg32 from Schizosaccharomyces pombe (strain 972 / ATCC 24843) (Fission yeast).